We begin with the raw amino-acid sequence, 157 residues long: MSRRHSAEKRDIPGDPIYGSVILEKFINKVMMHGKKSVARKIVYSALERFGKKLNLENVLEGFGEALENAKPILEVRSRRVGGATYQVPVEVASERRNCLAMQWIIKHARSKPGKSMEVGLATELIDCFNKQGATIKKREDTHRMAEANKAFAHYKW.

This sequence belongs to the universal ribosomal protein uS7 family. In terms of assembly, part of the 30S ribosomal subunit. Contacts proteins S9 and S11.

In terms of biological role, one of the primary rRNA binding proteins, it binds directly to 16S rRNA where it nucleates assembly of the head domain of the 30S subunit. Is located at the subunit interface close to the decoding center, probably blocks exit of the E-site tRNA. This is Small ribosomal subunit protein uS7 from Chlamydia pneumoniae (Chlamydophila pneumoniae).